Reading from the N-terminus, the 300-residue chain is Dihydroorotate dehydrogenase B (NAD(+)), catalytic subunit (300 aa).

FMN-binding positions include Ser21 and 45–46 (KS). Substrate is bound by residues Lys45, 69–73 (NAVGL), and Asn125. An FMN-binding site is contributed by Asn125. Cys128 acts as the Nucleophile in catalysis. FMN is bound by residues Lys163 and Ile187. Substrate is bound at residue 188 to 189 (NT). FMN-binding positions include Gly213, 239-240 (GG), and 261-262 (GT).

The protein belongs to the dihydroorotate dehydrogenase family. Type 1 subfamily. In terms of assembly, heterotetramer of 2 PyrK and 2 PyrD type B subunits. It depends on FMN as a cofactor.

The protein resides in the cytoplasm. It catalyses the reaction (S)-dihydroorotate + NAD(+) = orotate + NADH + H(+). Its pathway is pyrimidine metabolism; UMP biosynthesis via de novo pathway; orotate from (S)-dihydroorotate (NAD(+) route): step 1/1. Its function is as follows. Catalyzes the conversion of dihydroorotate to orotate with NAD(+) as electron acceptor. This Thermoplasma acidophilum (strain ATCC 25905 / DSM 1728 / JCM 9062 / NBRC 15155 / AMRC-C165) protein is Dihydroorotate dehydrogenase B (NAD(+)), catalytic subunit (pyrD).